A 636-amino-acid polypeptide reads, in one-letter code: Probable potassium transport system protein Kup (636 aa).

12 helical membrane-spanning segments follow: residues 23-43 (MALM…SPLY), 57-77 (PAHV…VVSL), 111-131 (WLLI…SMIT), 148-168 (HTLE…LFAI), 179-199 (LFGP…GYQI), 217-237 (FIAE…LALT), 258-278 (WFAM…ALLL), 287-307 (PFFL…ATVA), 348-368 (IYLP…VLLF), 377-397 (AYGF…FAVL), 409-429 (WMVL…ANIF), and 431-451 (IHEG…LMMT).

Belongs to the HAK/KUP transporter (TC 2.A.72) family.

The protein resides in the cell inner membrane. It carries out the reaction K(+)(in) + H(+)(in) = K(+)(out) + H(+)(out). Functionally, transport of potassium into the cell. Likely operates as a K(+):H(+) symporter. This Bordetella bronchiseptica (strain ATCC BAA-588 / NCTC 13252 / RB50) (Alcaligenes bronchisepticus) protein is Probable potassium transport system protein Kup.